A 326-amino-acid chain; its full sequence is Pantothenate kinase (326 aa).

104 to 111 lines the ATP pocket; the sequence is GSVAVGKS.

The protein belongs to the prokaryotic pantothenate kinase family.

It localises to the cytoplasm. It catalyses the reaction (R)-pantothenate + ATP = (R)-4'-phosphopantothenate + ADP + H(+). It participates in cofactor biosynthesis; coenzyme A biosynthesis; CoA from (R)-pantothenate: step 1/5. The polypeptide is Pantothenate kinase (Parvibaculum lavamentivorans (strain DS-1 / DSM 13023 / NCIMB 13966)).